Reading from the N-terminus, the 1231-residue chain is Alpha-protein kinase 1 (1231 aa).

Residues phenylalanine 61, glutamine 67, arginine 116, 150–153, aspartate 231, lysine 233, 236–237, and phenylalanine 295 contribute to the ADP-D-glycero-beta-D-manno-heptose site; these read RQAR and ST. Disordered stretches follow at residues 508-540, 609-637, 692-739, 767-791, 811-843, and 859-888; these read ERVSSQDSRSTASSKMSKKDQGKLQRERGRSWT, GSGQEKHPVEAQSSEAVSEEPKRNRSSRA, GSNN…GDVP, TFAPSSVDPEGETAESTDDGLSPSQ, PDGSVQNADSAKTGCSVRDQTVDPDASTVDEEG, and AHRPRALRSGQSAEGPKSFVNGSRPSPIFD. Polar residues predominate over residues 509–522; sequence RVSSQDSRSTASSK. Residues 524–537 are compositionally biased toward basic and acidic residues; it reads SKKDQGKLQRERGR. Over residues 700-714 the composition is skewed to low complexity; it reads SSHSCGSDSWSLSSS. A compositionally biased stretch (acidic residues) spans 775–784; sequence PEGETAESTD. The region spanning 1003–1223 is the Alpha-type protein kinase domain; that stretch reads KYSKKSELWT…ICHRLSLTRP (221 aa).

It belongs to the protein kinase superfamily. Alpha-type protein kinase family. ALPK subfamily. Widely expressed. Expressed in the retina and in sweat glands, especially in the myoepithelial cells.

The protein resides in the cytoplasm. It localises to the cytosol. The protein localises to the cytoskeleton. It is found in the spindle pole. Its subcellular location is the microtubule organizing center. The protein resides in the centrosome. It localises to the cell projection. The protein localises to the cilium. It carries out the reaction L-seryl-[protein] + ATP = O-phospho-L-seryl-[protein] + ADP + H(+). The catalysed reaction is L-threonyl-[protein] + ATP = O-phospho-L-threonyl-[protein] + ADP + H(+). Its activity is regulated as follows. Serine/threonine-protein kinase activity is stimulated upon ADP-D-glycero-beta-D-manno-heptose (ADP-Heptose)-binding. Functionally, serine/threonine-protein kinase that detects bacterial pathogen-associated molecular pattern metabolites (PAMPs) and initiates an innate immune response, a critical step for pathogen elimination and engagement of adaptive immunity. Specifically recognizes and binds ADP-D-glycero-beta-D-manno-heptose (ADP-Heptose), a potent PAMP present in all Gram-negative and some Gram-positive bacteria. ADP-Heptose-binding stimulates its kinase activity to phosphorylate and activate TIFA, triggering pro-inflammatory NF-kappa-B signaling. May be involved in monosodium urate monohydrate (MSU)-induced inflammation by mediating phosphorylation of unconventional myosin MYO9A. May also play a role in apical protein transport by mediating phosphorylation of unconventional myosin MYO1A. May play a role in ciliogenesis. This Mus musculus (Mouse) protein is Alpha-protein kinase 1.